The primary structure comprises 174 residues: I-Kappa-B like protein C1 (174 aa).

2 ANK repeats span residues 56–88 and 93–123; these read RGRQ…DINA and TGNS…NLGA.

It belongs to the polydnaviridae I-Kappa-B-like protein family.

Its function is as follows. Suppresses the host immune response through NF-kappa-B inactivation. Possesses ankyrin repeat domains required for NF-kappa-B binding but lacks the regulatory regions required for dissociation from NF-kappa-B and degradation. Therefore, prevents host NF-kappa-B release and subsequent activation. The protein is I-Kappa-B like protein C1 (C1) of Microplitis demolitor bracovirus (isolate Webb) (MdBV).